The following is a 461-amino-acid chain: Ribitol-5-phosphate transferase FKTN (461 aa).

The Cytoplasmic segment spans residues 1-7 (MSRINKN). A required and sufficient for interaction with POMGNT1 region spans residues 6 to 27 (KNVVLALLTLTSSAFLLFQLYY). Residues 8 to 28 (VVLALLTLTSSAFLLFQLYYY) traverse the membrane as a helical; Signal-anchor for type II membrane protein segment. The Lumenal segment spans residues 29–461 (KHYLSTKNGA…SEWDEVIQLY (433 aa)). N-linked (GlcNAc...) asparagine glycosylation is present at Asn92.

This sequence belongs to the LicD transferase family. In terms of assembly, forms a complex composed of FKTN/fukutin, FKRP and RXYLT1/TMEM5. Interacts (via transmembrane domain) with POMGNT1; the interaction is direct and is required for normal POMGNT1 location in Golgi membranes. Expressed in the retina (at protein level). Widely expressed with highest expression in brain, heart, pancreas and skeletal muscle. Expressed at similar levels in control fetal and adult brain. Expressed in migrating neurons, including Cajar-Retzius cells and adult cortical neurons, as well as hippocampal pyramidal cells and cerebellar Purkinje cells. No expression observed in the glia limitans, the subpial astrocytes (which contribute to basement membrane formation) or other glial cells.

The protein localises to the golgi apparatus membrane. Its subcellular location is the cytoplasm. The protein resides in the nucleus. It catalyses the reaction 3-O-[beta-D-GalNAc-(1-&gt;3)-beta-D-GlcNAc-(1-&gt;4)-(O-6-P-alpha-D-Man)]-Thr-[protein] + CDP-L-ribitol = 3-O-[Rib-ol-P-3-beta-D-GalNAc-(1-&gt;3)-beta-D-GlcNAc-(1-&gt;4)-(O-6-P-alpha-D-Man)]-Thr-[protein] + CMP + H(+). It functions in the pathway protein modification; protein glycosylation. In terms of biological role, catalyzes the transfer of a ribitol-phosphate from CDP-ribitol to the distal N-acetylgalactosamine of the phosphorylated O-mannosyl trisaccharide (N-acetylgalactosamine-beta-3-N-acetylglucosamine-beta-4-(phosphate-6-)mannose), a carbohydrate structure present in alpha-dystroglycan (DAG1). This constitutes the first step in the formation of the ribitol 5-phosphate tandem repeat which links the phosphorylated O-mannosyl trisaccharide to the ligand binding moiety composed of repeats of 3-xylosyl-alpha-1,3-glucuronic acid-beta-1. Required for normal location of POMGNT1 in Golgi membranes, and for normal POMGNT1 activity. May interact with and reinforce a large complex encompassing the outside and inside of muscle membranes. Could be involved in brain development. In Homo sapiens (Human), this protein is Ribitol-5-phosphate transferase FKTN.